Here is a 64-residue protein sequence, read N- to C-terminus: Large ribosomal subunit protein bL35 (64 aa).

It belongs to the bacterial ribosomal protein bL35 family.

The protein is Large ribosomal subunit protein bL35 of Ureaplasma urealyticum serovar 10 (strain ATCC 33699 / Western).